Consider the following 389-residue polypeptide: Sulfate adenylyltransferase (389 aa).

This sequence belongs to the sulfate adenylyltransferase family.

It catalyses the reaction sulfate + ATP + H(+) = adenosine 5'-phosphosulfate + diphosphate. It participates in sulfur metabolism; hydrogen sulfide biosynthesis; sulfite from sulfate: step 1/3. In Microcystis aeruginosa (strain NIES-843 / IAM M-2473), this protein is Sulfate adenylyltransferase.